Consider the following 964-residue polypeptide: A-type ATP synthase subunit A (964 aa).

The region spanning 392 to 518 is the DOD-type homing endonuclease domain; it reads FLGYLMANGT…LSYLFAKLGI (127 aa).

It belongs to the ATPase alpha/beta chains family. Has multiple subunits with at least A(3), B(3), C, D, E, F, H, I and proteolipid K(x). In terms of processing, this protein undergoes a protein self splicing that involves a post-translational excision of the VDE intervening region (intein) followed by peptide ligation.

Its subcellular location is the cell membrane. It catalyses the reaction ATP + H2O + 4 H(+)(in) = ADP + phosphate + 5 H(+)(out). Its function is as follows. Component of the A-type ATP synthase that produces ATP from ADP in the presence of a proton gradient across the membrane. The A chain is the catalytic subunit. The protein is A-type ATP synthase subunit A of Pyrococcus horikoshii (strain ATCC 700860 / DSM 12428 / JCM 9974 / NBRC 100139 / OT-3).